Reading from the N-terminus, the 158-residue chain is 18.2 kDa class I heat shock protein (158 aa).

In terms of domain architecture, sHSP spans 44 to 158 (ENSAFVSTRV…PEVKTIDISG (115 aa)).

This sequence belongs to the small heat shock protein (HSP20) family. As to quaternary structure, forms oligomeric structures.

The protein localises to the cytoplasm. This Medicago sativa (Alfalfa) protein is 18.2 kDa class I heat shock protein (HSP18.2).